The primary structure comprises 302 residues: Eukaryotic translation initiation factor 3 subunit F (302 aa).

Residues Ile23 to Gly165 form the MPN domain. Ser162 is subject to Phosphoserine.

It belongs to the eIF-3 subunit F family. Component of the eukaryotic translation initiation factor 3 (eIF-3) complex. The eIF-3 complex appears to include tif32/eif3a, SPAC25G10.08/eif3b, tif33/eif3c, SPBC4C3.07/eif3f, tif35/eif3g and sum1/eif3i. This set of common subunits may also associate exclusively with either moe1/eif3d and int6/eif3e, or with SPAC821.05/eif3h and SPAC1751.03/eif3m. The eIF-3 complex may also include SPAC3A12.13c/eif3j.

It localises to the cytoplasm. Component of the eukaryotic translation initiation factor 3 (eIF-3) complex, which is involved in protein synthesis of a specialized repertoire of mRNAs and, together with other initiation factors, stimulates binding of mRNA and methionyl-tRNAi to the 40S ribosome. The eIF-3 complex specifically targets and initiates translation of a subset of mRNAs involved in cell proliferation. The polypeptide is Eukaryotic translation initiation factor 3 subunit F (Schizosaccharomyces pombe (strain 972 / ATCC 24843) (Fission yeast)).